Here is a 365-residue protein sequence, read N- to C-terminus: Endophilin-B1 (365 aa).

Residue methionine 1 is modified to N-acetylmethionine. The tract at residues methionine 1–leucine 30 is membrane-binding amphipathic helix. The required for membrane binding stretch occupies residues methionine 1–glutamate 37. A BAR domain is found at glutamate 27–serine 261. The residue at position 145 (threonine 145) is a Phosphothreonine; by CDK5. A coiled-coil region spans residues tyrosine 155 to leucine 195. In terms of domain architecture, SH3 spans glycine 305–asparagine 365.

This sequence belongs to the endophilin family. As to quaternary structure, homodimer, and heterodimer with SH3GLB2. Binds BAX; induction of apoptosis augments BAX binding. Binds DNM1, HTT, AMPH, BIN1 and ARFGAP1. Interacts with UVRAG; UVRAG bridges the interaction to BECN1 indicative for an association with the PI3K complex II (PI3KC3-C2). Phosphorylated at Thr-145 by CDK5; this phosphorylation is required for autophagy induction in starved neurons and facilitates homodimerization.

It localises to the cytoplasm. Its subcellular location is the golgi apparatus membrane. The protein localises to the mitochondrion outer membrane. The protein resides in the cytoplasmic vesicle. It is found in the autophagosome membrane. It localises to the midbody. May be required for normal outer mitochondrial membrane dynamics. Required for coatomer-mediated retrograde transport in certain cells. May recruit other proteins to membranes with high curvature. May promote membrane fusion. Involved in activation of caspase-dependent apoptosis by promoting BAX/BAK1 activation. Involved in caspase-independent apoptosis during nutrition starvation and involved in the regulation of autophagy. Activates lipid kinase activity of PIK3C3 during autophagy probably by associating with the PI3K complex II (PI3KC3-C2). Associated with PI3KC3-C2 during autophagy may regulate the trafficking of ATG9A from the Golgi complex to the peripheral cytoplasm for the formation of autophagosomes by inducing Golgi membrane tubulation and fragmentation. Involved in regulation of degradative endocytic trafficking and cytokinesis, probably in the context of PI3KC3-C2. This is Endophilin-B1 (SH3GLB1) from Bos taurus (Bovine).